The chain runs to 311 residues: Porphobilinogen deaminase (311 aa).

The residue at position 241 (Cys-241) is an S-(dipyrrolylmethanemethyl)cysteine.

It belongs to the HMBS family. Monomer. Dipyrromethane serves as cofactor.

It carries out the reaction 4 porphobilinogen + H2O = hydroxymethylbilane + 4 NH4(+). It participates in porphyrin-containing compound metabolism; protoporphyrin-IX biosynthesis; coproporphyrinogen-III from 5-aminolevulinate: step 2/4. In terms of biological role, tetrapolymerization of the monopyrrole PBG into the hydroxymethylbilane pre-uroporphyrinogen in several discrete steps. The chain is Porphobilinogen deaminase from Shouchella clausii (strain KSM-K16) (Alkalihalobacillus clausii).